The sequence spans 269 residues: Meiotically up-regulated gene 43 protein (269 aa).

The protein resides in the mitochondrion. Has a role in meiosis. In Schizosaccharomyces pombe (strain 972 / ATCC 24843) (Fission yeast), this protein is Meiotically up-regulated gene 43 protein (mug43).